The following is a 222-amino-acid chain: Putative adhesin RP828 (222 aa).

A signal peptide spans 1–22 (MKKLLLIATASATILSSSVSFA).

Its function is as follows. Adheres to biotinylated epithelial (Vero cell) proteins. The polypeptide is Putative adhesin RP828 (Rickettsia prowazekii (strain Madrid E)).